Here is a 188-residue protein sequence, read N- to C-terminus: Calcium load-activated calcium channel (188 aa).

At 1-4 (MSTM) the chain is on the lumenal side. A helical transmembrane segment spans residues 5–32 (FADTILIVFISICTALLAEGITWVLVYR). The stretch at 32–89 (RTDKYKRLKAEVEKQSKKLEKKKETITESAGRQQKKKIERQEEKLKNNNRDLSMVRMK) forms a coiled coil. The Cytoplasmic segment spans residues 33–86 (TDKYKRLKAEVEKQSKKLEKKKETITESAGRQQKKKIERQEEKLKNNNRDLSMV). A helical membrane pass occupies residues 87 to 106 (RMKSMFAIGFCFTALMGMFN). Topologically, residues 107–120 (SIFDGRVVAKLPFV) are lumenal. The stretch at 121-130 (PLSYIQGLSH) is an intramembrane region. Over 131-140 (RNLLGEDYTD) the chain is Lumenal. A helical membrane pass occupies residues 141–162 (CSFIFLYILCTMSIRQNIQKML). Residues 163–188 (GLAPSRAATKQAGGFLGPPPQAAKFS) are Cytoplasmic-facing.

It belongs to the TMCO1 family. Homodimer and homotetramer. Component of the multi-pass translocon (MPT) complex.

It is found in the endoplasmic reticulum membrane. Its subcellular location is the golgi apparatus membrane. Functionally, calcium-selective channel required to prevent calcium stores from overfilling, thereby playing a key role in calcium homeostasis. In response to endoplasmic reticulum (ER) overloading, assembles into a homotetramer, forming a functional calcium-selective channel, regulating the calcium content in endoplasmic reticulum store. Component of the multi-pass translocon (MPT) complex that mediates insertion of multi-pass membrane proteins into the lipid bilayer of membranes. The sequence is that of Calcium load-activated calcium channel from Danio rerio (Zebrafish).